The primary structure comprises 466 residues: Glycine--tRNA ligase (466 aa).

2 residues coordinate substrate: Arg104 and Glu178. Residues 210–212 (RNE), 220–225 (FRTREF), 294–295 (EL), and 338–341 (GADR) contribute to the ATP site. Position 225–229 (225–229 (FEQME)) interacts with substrate. Residue 334-338 (EPSLG) coordinates substrate.

This sequence belongs to the class-II aminoacyl-tRNA synthetase family. Homodimer.

It localises to the cytoplasm. The enzyme catalyses tRNA(Gly) + glycine + ATP = glycyl-tRNA(Gly) + AMP + diphosphate. Its function is as follows. Catalyzes the attachment of glycine to tRNA(Gly). This chain is Glycine--tRNA ligase, found in Geobacillus thermodenitrificans (strain NG80-2).